We begin with the raw amino-acid sequence, 306 residues long: Curved DNA-binding protein (306 aa).

Residues 5–69 (DYYAIMGVKP…QRRAEYDQMW (65 aa)) form the J domain.

It localises to the cytoplasm. The protein resides in the nucleoid. In terms of biological role, DNA-binding protein that preferentially recognizes a curved DNA sequence. It is probably a functional analog of DnaJ; displays overlapping activities with DnaJ, but functions under different conditions, probably acting as a molecular chaperone in an adaptive response to environmental stresses other than heat shock. Lacks autonomous chaperone activity; binds native substrates and targets them for recognition by DnaK. Its activity is inhibited by the binding of CbpM. The protein is Curved DNA-binding protein of Escherichia coli (strain 55989 / EAEC).